The primary structure comprises 23 residues: Cysteine-rich venom protein 24 (23 aa).

The segment at 1-23 (VDFASESXNKRENQQIVDKHNAL) is disordered. Residues 8–23 (XNKRENQQIVDKHNAL) are compositionally biased toward basic and acidic residues.

The protein belongs to the CRISP family. Contains 8 disulfide bonds. As to expression, expressed by the venom gland.

The protein resides in the secreted. This is Cysteine-rich venom protein 24 from Naja kaouthia (Monocled cobra).